A 300-amino-acid polypeptide reads, in one-letter code: MSYRELVVELAREHAEALSDALLDLGALSVSVEDADADTPDEQPLFGEPGLVPERTAWQHSRVVALLSPDLEPAVLLAAAANEIGIADTPKFDVREVEEQDWVRLTQSQFEPIPIGERIWVVPSWHDAPDPDALILELDPGLAFGTGSHPTTRLCMEWLEQTVKPGQSVLDYGCGSGILAILARKCGADPVIGIDIDPQAVESARQNSERNHADVTYGLPDACPDGEFDIVVANILSNPLKLMASMLASKVKPGGRIALSGVLARQADEVAAVYARYVDISVWREHEGWVCLAGTRRESH.

S-adenosyl-L-methionine-binding residues include T152, G173, D195, and N234.

This sequence belongs to the methyltransferase superfamily. PrmA family.

The protein localises to the cytoplasm. It catalyses the reaction L-lysyl-[protein] + 3 S-adenosyl-L-methionine = N(6),N(6),N(6)-trimethyl-L-lysyl-[protein] + 3 S-adenosyl-L-homocysteine + 3 H(+). In terms of biological role, methylates ribosomal protein L11. This Burkholderia vietnamiensis (strain G4 / LMG 22486) (Burkholderia cepacia (strain R1808)) protein is Ribosomal protein L11 methyltransferase.